The primary structure comprises 504 residues: Ribosomal protein uS12 methylthiotransferase RimO (504 aa).

The region spanning 19-135 (KKVGFVSLGC…ILAASGIEPR (117 aa)) is the MTTase N-terminal domain. The [4Fe-4S] cluster site is built by Cys-28, Cys-64, Cys-98, Cys-214, Cys-218, and Cys-221. The 231-residue stretch at 200–430 (ATPKYMAYIK…MSLQKQISKK (231 aa)) folds into the Radical SAM core domain. The region spanning 433–504 (KALIGREFDV…HDYDLVARLL (72 aa)) is the TRAM domain.

It belongs to the methylthiotransferase family. RimO subfamily. [4Fe-4S] cluster is required as a cofactor.

The protein resides in the cytoplasm. It carries out the reaction L-aspartate(89)-[ribosomal protein uS12]-hydrogen + (sulfur carrier)-SH + AH2 + 2 S-adenosyl-L-methionine = 3-methylsulfanyl-L-aspartate(89)-[ribosomal protein uS12]-hydrogen + (sulfur carrier)-H + 5'-deoxyadenosine + L-methionine + A + S-adenosyl-L-homocysteine + 2 H(+). Functionally, catalyzes the methylthiolation of an aspartic acid residue of ribosomal protein uS12. The chain is Ribosomal protein uS12 methylthiotransferase RimO from Koribacter versatilis (strain Ellin345).